We begin with the raw amino-acid sequence, 252 residues long: tRNA (guanine-N(7)-)-methyltransferase (252 aa).

S-adenosyl-L-methionine is bound by residues Glu75, Glu100, Asp127, and Asp150. Asp150 is an active-site residue. Residue Lys154 coordinates substrate. Positions 156–161 (RHNKRR) are interaction with RNA. Residues Asp186 and 223–226 (THFE) contribute to the substrate site.

This sequence belongs to the class I-like SAM-binding methyltransferase superfamily. TrmB family.

It catalyses the reaction guanosine(46) in tRNA + S-adenosyl-L-methionine = N(7)-methylguanosine(46) in tRNA + S-adenosyl-L-homocysteine. The protein operates within tRNA modification; N(7)-methylguanine-tRNA biosynthesis. Its function is as follows. Catalyzes the formation of N(7)-methylguanine at position 46 (m7G46) in tRNA. The polypeptide is tRNA (guanine-N(7)-)-methyltransferase (Xanthomonas oryzae pv. oryzae (strain MAFF 311018)).